The sequence spans 411 residues: Ribose-phosphate pyrophosphokinase 3, chloroplastic (411 aa).

The transit peptide at Met-1–Lys-39 directs the protein to the chloroplast. Mg(2+)-binding residues include Asp-231 and His-233. Positions Gly-314–Thr-329 are binding of phosphoribosylpyrophosphate.

Belongs to the ribose-phosphate pyrophosphokinase family.

It localises to the plastid. The protein localises to the chloroplast. It carries out the reaction D-ribose 5-phosphate + ATP = 5-phospho-alpha-D-ribose 1-diphosphate + AMP + H(+). In Arabidopsis thaliana (Mouse-ear cress), this protein is Ribose-phosphate pyrophosphokinase 3, chloroplastic (PRS3).